The sequence spans 1154 residues: DNA-directed RNA polymerase, mitochondrial (1154 aa).

The transit peptide at 1–30 (MLRRKIQTYLSRSHIRRGLCGLRFFQTQRL) directs the protein to the mitochondrion. The tract at residues 221–243 (ESENGKDQNGDSSLKEKQPDVET) is disordered. Positions 223–240 (ENGKDQNGDSSLKEKQPD) are enriched in basic and acidic residues. Residues Asp-821, Lys-890, and Asp-1061 contribute to the active site.

It belongs to the phage and mitochondrial RNA polymerase family.

The protein resides in the mitochondrion. The enzyme catalyses RNA(n) + a ribonucleoside 5'-triphosphate = RNA(n+1) + diphosphate. Its function is as follows. DNA-dependent RNA polymerase catalyzes the transcription of DNA into RNA using the four ribonucleoside triphosphates as substrates. Combines in the mitochondrion with mitochondrial transcription factor mtf1 as a holoenzyme to recognize and initiate transcription at the core mitochondrial promoters. The sequence is that of DNA-directed RNA polymerase, mitochondrial (rpo41) from Schizosaccharomyces pombe (strain 972 / ATCC 24843) (Fission yeast).